Here is a 362-residue protein sequence, read N- to C-terminus: Chorismate synthase (362 aa).

Arginine 46 contributes to the NADP(+) binding site. Residues arginine 122–serine 124, asparagine 238–alanine 239, glycine 278, lysine 293–serine 297, and arginine 319 each bind FMN.

Belongs to the chorismate synthase family. Homotetramer. FMNH2 serves as cofactor.

It catalyses the reaction 5-O-(1-carboxyvinyl)-3-phosphoshikimate = chorismate + phosphate. The protein operates within metabolic intermediate biosynthesis; chorismate biosynthesis; chorismate from D-erythrose 4-phosphate and phosphoenolpyruvate: step 7/7. Functionally, catalyzes the anti-1,4-elimination of the C-3 phosphate and the C-6 proR hydrogen from 5-enolpyruvylshikimate-3-phosphate (EPSP) to yield chorismate, which is the branch point compound that serves as the starting substrate for the three terminal pathways of aromatic amino acid biosynthesis. This reaction introduces a second double bond into the aromatic ring system. The polypeptide is Chorismate synthase (Campylobacter jejuni subsp. jejuni serotype O:6 (strain 81116 / NCTC 11828)).